Consider the following 298-residue polypeptide: Succinate dehydrogenase [ubiquinone] iron-sulfur subunit, mitochondrial (298 aa).

The 2Fe-2S ferredoxin-type domain maps to 59-147 (YRFNPEAPGA…STKIYPLPHM (89 aa)). Cys107, Cys112, Cys115, and Cys127 together coordinate [2Fe-2S] cluster. The region spanning 190–220 (ERDRLDGLYECILCACCSTSCPSYWWNADKY) is the 4Fe-4S ferredoxin-type domain. Residues Cys200, Cys203, and Cys206 each coordinate [4Fe-4S] cluster. Cys210 is a [3Fe-4S] cluster binding site. An a ubiquinone-binding site is contributed by Trp215. [3Fe-4S] cluster-binding residues include Cys257 and Cys263. Cys267 contributes to the [4Fe-4S] cluster binding site.

This sequence belongs to the succinate dehydrogenase/fumarate reductase iron-sulfur protein family. As to quaternary structure, component of complex II composed of four subunits: a flavoprotein (FP), an iron-sulfur protein (IP), and a cytochrome b composed of a large and a small subunit. Requires [2Fe-2S] cluster as cofactor. [3Fe-4S] cluster is required as a cofactor. It depends on [4Fe-4S] cluster as a cofactor.

The protein resides in the mitochondrion inner membrane. The enzyme catalyses a quinone + succinate = fumarate + a quinol. The protein operates within carbohydrate metabolism; tricarboxylic acid cycle; fumarate from succinate (eukaryal route): step 1/1. In terms of biological role, iron-sulfur protein (IP) subunit of succinate dehydrogenase (SDH) that is involved in complex II of the mitochondrial electron transport chain and is responsible for transferring electrons from succinate to ubiquinone (coenzyme Q). This chain is Succinate dehydrogenase [ubiquinone] iron-sulfur subunit, mitochondrial (sdhb-1), found in Caenorhabditis elegans.